The sequence spans 271 residues: MLTKKPEINTILQTTPDPHSLPAAMATEDLHVYYGDNHAIKGVDLTFPENKVTALIGPSGCGKSTYLRALNRMNDEIDGCRMEGQILYDGININRKEVDLYNVRKEIGMVFQKPNPFTKSIYENVAFGLKRHGMKNKKEIMERVEKSLRRAALWDEVKDDLGKSALSLSGGQQQRLCIARAVAMQPKVLLLDEPASALDPISTSKIEDLINELKNKYTIIIVTHNMQQAARVSDYTSFFYLGEVVEFSGTSELFTNPQEKQTEDYISGNFG.

A disordered region spans residues 1-20 (MLTKKPEINTILQTTPDPHS). The ABC transporter domain maps to 25–266 (MATEDLHVYY…PQEKQTEDYI (242 aa)). 57–64 (GPSGCGKS) contributes to the ATP binding site.

This sequence belongs to the ABC transporter superfamily. Phosphate importer (TC 3.A.1.7) family. In terms of assembly, the complex is composed of two ATP-binding proteins (PstB), two transmembrane proteins (PstC and PstA) and a solute-binding protein (PstS).

It localises to the cell membrane. The enzyme catalyses phosphate(out) + ATP + H2O = ADP + 2 phosphate(in) + H(+). Part of the ABC transporter complex PstSACB involved in phosphate import. Responsible for energy coupling to the transport system. The sequence is that of Phosphate import ATP-binding protein PstB 2 from Listeria innocua serovar 6a (strain ATCC BAA-680 / CLIP 11262).